A 751-amino-acid chain; its full sequence is Diamine oxidase [copper-containing] (751 aa).

Positions 1–19 (MPALGWAVAAILMLQTAMA) are cleaved as a signal peptide. 2 N-linked (GlcNAc...) asparagine glycosylation sites follow: Asn110 and Asn168. Cys177 and Cys181 are joined by a disulfide. The Proton acceptor role is filled by Asp373. Cysteines 391 and 417 form a disulfide. Tyr461 (schiff-base intermediate with substrate; via topaquinone) is an active-site residue. A 2',4',5'-topaquinone modification is found at Tyr461. Residues His510 and His512 each coordinate Cu(2+). Ca(2+)-binding residues include Asp519, Leu520, and Asp521. The N-linked (GlcNAc...) asparagine glycan is linked to Asn538. Glu562, Phe653, Asn656, Glu658, Asp664, and Leu665 together coordinate Ca(2+). A Cu(2+)-binding site is contributed by His675. N-linked (GlcNAc...) asparagine glycosylation is present at Asn745.

This sequence belongs to the copper/topaquinone oxidase family. As to quaternary structure, homodimer; disulfide-linked. The cofactor is Cu(2+). Requires Ca(2+) as cofactor. L-topaquinone is required as a cofactor. In terms of processing, N-glycosylated. Topaquinone (TPQ) is generated by copper-dependent autoxidation of a specific tyrosyl residue. As to expression, widely expressed with higher expression in placenta and kidney.

The protein resides in the secreted. It localises to the extracellular space. It is found in the cell membrane. It catalyses the reaction histamine + O2 + H2O = imidazole-4-acetaldehyde + H2O2 + NH4(+). The enzyme catalyses N(tau)-methylhistamine + O2 + H2O = 1-methylimidazole-4-acetaldehyde + H2O2 + NH4(+). It carries out the reaction putrescine + O2 + H2O = 4-aminobutanal + H2O2 + NH4(+). The catalysed reaction is cadaverine + O2 + H2O = 5-aminopentanal + H2O2 + NH4(+). With respect to regulation, inhibited by amiloride and amiloride analogs. Inhibited by isoniazid, cimetidine, clonidine, berenil and pentamidine. Its function is as follows. Catalyzes the oxidative deamination of primary amines to the corresponding aldehydes with the concomitant production of hydrogen peroxide and ammonia. Its preferred substrates are the diamines histamine and 1-methylhistamine and it could therefore play a role in allergic and immune responses. Has a broad specificity for diamines and can also act on cadaverine and putrescine, two products of amino acid catabolism. It could also act on polyamines, like spermidine and spermine though less efficiently, and regulate various biological processes. The sequence is that of Diamine oxidase [copper-containing] from Homo sapiens (Human).